The primary structure comprises 217 residues: tRNA (guanine-N(7)-)-methyltransferase (217 aa).

The S-adenosyl-L-methionine site is built by E48, E73, N100, and D123. D123 is an active-site residue. Residues K127 and D159 each contribute to the substrate site.

Belongs to the class I-like SAM-binding methyltransferase superfamily. TrmB family.

It carries out the reaction guanosine(46) in tRNA + S-adenosyl-L-methionine = N(7)-methylguanosine(46) in tRNA + S-adenosyl-L-homocysteine. It participates in tRNA modification; N(7)-methylguanine-tRNA biosynthesis. Catalyzes the formation of N(7)-methylguanine at position 46 (m7G46) in tRNA. The sequence is that of tRNA (guanine-N(7)-)-methyltransferase from Leptospira interrogans serogroup Icterohaemorrhagiae serovar copenhageni (strain Fiocruz L1-130).